Reading from the N-terminus, the 174-residue chain is Glyoxylase I 4 (174 aa).

One can recognise a VOC domain in the interval 13-135 (SLNHVSVLCR…DGFMIEICNC (123 aa)). Glutamate 131 (proton donor/acceptor) is an active-site residue.

The protein belongs to the glyoxalase I family. Mostly expressed in roots, and, to a lower extent, in leaves, flowers, seeds and siliques.

Its subcellular location is the cell membrane. It is found in the cytoplasm. Its function is as follows. Involved in the detoxification and scavenging of methylglyoxal (MG), a cytotoxic aldehyde produced in response to primary metabolism alteration observed during biotic and abiotic stresses. Modulates cross-talk between salicylic acid (SA) and jasmonic acid (JA) signaling pathways during defense responses to pathogens such as Botrytis cinerea. In Arabidopsis thaliana (Mouse-ear cress), this protein is Glyoxylase I 4.